The primary structure comprises 521 residues: Cytochrome P450 monooxygenase astF (521 aa).

Residues Thr-14–Gly-34 traverse the membrane as a helical segment. N-linked (GlcNAc...) asparagine glycosylation is found at Asn-198, Asn-218, Asn-268, and Asn-281. Cys-430 contributes to the heme binding site.

This sequence belongs to the cytochrome P450 family. The cofactor is heme.

Its subcellular location is the membrane. Its pathway is secondary metabolite biosynthesis; terpenoid biosynthesis. Cytochrome P450 monooxygenase; part of the gene cluster that mediates the biosynthesis of astellolides, drimane-type sesquiterpene esters that show antimicrobial, anti-inflammatory, and anti-tumor activities. The first step in astellolide biosynthesis is performed by the sesquiterpene cyclase astC that catalyzes the formation of drimanyl pyrophosphate from farnesyl pyrophosphate. Drimanyl pyrophosphate is then dephosphorylated by the sesquiterpene phosphatase astI to produce drimanyl monophosphate which is further dephosphorylated to drim-8-ene-11-ol by atsK. Drim-8-ene-11-ol is converted to confertifolin, probably by the cytochrome P450 monooxygenase astD and/or the dehydrogenase astE. The cytochrome P450 monooxygenases astB, astF and astJ then hydroxylate confertifolin at C6, C14, or C15 to form trihydroxy confertifolin. The nonribosomal peptide synthetase astA catalyzes ester bond formation between trihydroxy contifolin and benzoic acid (BA) or 4-hydroxy benzoic acid (4HBA), leading to the formation of dideacetyl astellolides A and B, respectively. Finally, the O-acetyltransferase astG converts dideacetyl astellolides A and B into deacetyl astellolides A and B. This is Cytochrome P450 monooxygenase astF from Aspergillus oryzae (strain ATCC 42149 / RIB 40) (Yellow koji mold).